A 131-amino-acid chain; its full sequence is Glycine cleavage system H protein (131 aa).

In terms of domain architecture, Lipoyl-binding spans arginine 24 to glutamate 106. N6-lipoyllysine is present on lysine 65.

Belongs to the GcvH family. In terms of assembly, the glycine cleavage system is composed of four proteins: P, T, L and H. (R)-lipoate serves as cofactor.

Its function is as follows. The glycine cleavage system catalyzes the degradation of glycine. The H protein shuttles the methylamine group of glycine from the P protein to the T protein. This Xylella fastidiosa (strain M12) protein is Glycine cleavage system H protein.